We begin with the raw amino-acid sequence, 142 residues long: Large ribosomal subunit protein cL37 alpha (142 aa).

The transit peptide at 1–62 (MALLSPLLSL…AQKRGTVVAM (62 aa)) directs the protein to the chloroplast. The tract at residues 123–142 (RKLRKRGAWPPSKMKKLKNV) is disordered.

The protein belongs to the chloroplast-specific ribosomal protein cL37 family. Component of the chloroplast large ribosomal subunit (LSU). Mature 70S chloroplast ribosomes of higher plants consist of a small (30S) and a large (50S) subunit. The 30S small subunit contains 1 molecule of ribosomal RNA (16S rRNA) and 24 different proteins. The 50S large subunit contains 3 rRNA molecules (23S, 5S and 4.5S rRNA) and 33 different proteins.

It localises to the plastid. Its subcellular location is the chloroplast. In terms of biological role, component of the chloroplast ribosome (chloro-ribosome), a dedicated translation machinery responsible for the synthesis of chloroplast genome-encoded proteins, including proteins of the transcription and translation machinery and components of the photosynthetic apparatus. In Spinacia oleracea (Spinach), this protein is Large ribosomal subunit protein cL37 alpha (PSRP5).